A 106-amino-acid chain; its full sequence is Guanyl-specific ribonuclease Th1 (106 aa).

2 cysteine pairs are disulfide-bonded: cysteine 5–cysteine 103 and cysteine 23–cysteine 84. Residue histidine 39 is part of the active site. The active-site Proton acceptor is glutamate 58. Histidine 92 acts as the Proton donor in catalysis.

The protein belongs to the ribonuclease N1/T1 family.

It carries out the reaction [RNA] containing guanosine + H2O = an [RNA fragment]-3'-guanosine-3'-phosphate + a 5'-hydroxy-ribonucleotide-3'-[RNA fragment].. The protein is Guanyl-specific ribonuclease Th1 of Trichoderma harzianum (Hypocrea lixii).